The following is a 207-amino-acid chain: Uracil phosphoribosyltransferase (207 aa).

Residues Arg77, Arg102, and 129–137 (DPMLATGGS) contribute to the 5-phospho-alpha-D-ribose 1-diphosphate site. Uracil is bound by residues Ile192 and 197–199 (GDA). Residue Asp198 coordinates 5-phospho-alpha-D-ribose 1-diphosphate.

Belongs to the UPRTase family. Mg(2+) is required as a cofactor.

The catalysed reaction is UMP + diphosphate = 5-phospho-alpha-D-ribose 1-diphosphate + uracil. It functions in the pathway pyrimidine metabolism; UMP biosynthesis via salvage pathway; UMP from uracil: step 1/1. Allosterically activated by GTP. Catalyzes the conversion of uracil and 5-phospho-alpha-D-ribose 1-diphosphate (PRPP) to UMP and diphosphate. In Mycoplasma mycoides subsp. mycoides SC (strain CCUG 32753 / NCTC 10114 / PG1), this protein is Uracil phosphoribosyltransferase.